A 558-amino-acid polypeptide reads, in one-letter code: Protein SET DOMAIN GROUP 41 (558 aa).

The region spanning 115–249 (PSISVAIHHA…SGEEITVSYI (135 aa)) is the SET domain.

It belongs to the class V-like SAM-binding methyltransferase superfamily.

This is Protein SET DOMAIN GROUP 41 (SDG41) from Arabidopsis thaliana (Mouse-ear cress).